Reading from the N-terminus, the 264-residue chain is Wtf element wtf11 (264 aa).

Residues Met1–Val12 are compositionally biased toward polar residues. The segment at Met1 to Leu26 is disordered. The next 4 helical transmembrane spans lie at Leu107 to Gly127, Leu145 to Trp165, Trp180 to Val200, and Ser217 to Leu237.

This sequence belongs to the WTF family.

The protein resides in the membrane. May act in meiotic drive. This Schizosaccharomyces pombe (strain 972 / ATCC 24843) (Fission yeast) protein is Wtf element wtf11.